A 124-amino-acid polypeptide reads, in one-letter code: Small ribosomal subunit protein uS12 (124 aa).

A disordered region spans residues 1–20 (MATISQLVRNPRKDKVQKTS). Asp89 carries the 3-methylthioaspartic acid modification. Residues 104-124 (TSGVTARRKGRSKYGAKRPKA) form a disordered region. Residues 109-124 (ARRKGRSKYGAKRPKA) show a composition bias toward basic residues.

It belongs to the universal ribosomal protein uS12 family. Part of the 30S ribosomal subunit. Contacts proteins S8 and S17. May interact with IF1 in the 30S initiation complex.

With S4 and S5 plays an important role in translational accuracy. In terms of biological role, interacts with and stabilizes bases of the 16S rRNA that are involved in tRNA selection in the A site and with the mRNA backbone. Located at the interface of the 30S and 50S subunits, it traverses the body of the 30S subunit contacting proteins on the other side and probably holding the rRNA structure together. The combined cluster of proteins S8, S12 and S17 appears to hold together the shoulder and platform of the 30S subunit. The polypeptide is Small ribosomal subunit protein uS12 (Psychromonas ingrahamii (strain DSM 17664 / CCUG 51855 / 37)).